Consider the following 358-residue polypeptide: MHMPVAGPHTHTLFTVSRTMLTVVAALTPATLFGLWEFGWPAIFLFLTTVVSAWVFEVACLKIADKPIRPFATDGSAILSGWLVAMTLPPYAPWWVGVIGSFIAIVIAKHLFGGLGQNLFNPAMVARAMLVVALPVQMTTWIAPVGLLEGPSFLHGLSITFLGSQEFDAVSSASTLSHIKSQISAGATMGEILPTLADLESRLLGFVPGSLGETSTVLLALGGLLLLVTRIITPTIPLAVLGTLVTLSAICSFLAPDRFAPPILHLTSGSTMLCAFFIATDYVTSPVTTAGKWVYGIGIGTLVFVIPLRRLPRGRGLCGALDELGHAPDRNLHPAADLRTVPHRQAACAAKPAKGAQK.

7 consecutive transmembrane segments (helical) span residues 16 to 36 (VSRT…FGLW), 38 to 58 (FGWP…VFEV), 68 to 90 (IRPF…TLPP), 128 to 148 (AMLV…VGLL), 206 to 226 (FVPG…GLLL), 236 to 256 (IPLA…FLAP), and 286 to 306 (PVTT…VFVI).

It belongs to the NqrB/RnfD family. In terms of assembly, the complex is composed of six subunits: RnfA, RnfB, RnfC, RnfD, RnfE and RnfG. Requires FMN as cofactor.

It is found in the cellular chromatophore membrane. Its function is as follows. Part of a membrane-bound complex that couples electron transfer with translocation of ions across the membrane. Required for nitrogen fixation. Involved in electron transfer to nitrogenase. The sequence is that of Ion-translocating oxidoreductase complex subunit D from Rhodobacter capsulatus (Rhodopseudomonas capsulata).